The following is a 279-amino-acid chain: MATHKPINILEAFAAAPPPLDYVLPNMVAGTVGALVSPGGAGKSMLALQLAAQIAGGPDLLEVGELPTGPVIYLPAEDPPTAIHHRLHALGAHLSAEERQAVADGLLIQPLIGSLPNIMAPEWFDGLKRAAEGRRLMVLDTLRRFHIEEENASGPMAQVIGRMEAIAADTGCSIVFLHHASKGAAMMGAGDQQQASRGSSVLVDNIRWQSYLSSMTSAEAEEWGVDDDQRRFFVRFGVSKANYGAPFADRWFRRHDGGVLKPAVLERQRKSKGVPRGEA.

Its function is as follows. This protein is involved in regulating the plasmid copy-number. Increasing the level of this protein results in a higher plasmid copy-number. This Escherichia coli protein is Regulatory protein RepA (repA).